Here is a 920-residue protein sequence, read N- to C-terminus: GTPase activating protein homolog 1 (920 aa).

Low complexity predominate over residues 65–87; it reads NLGGLSNDSTNNNSNSNNTIDSS. Residues 65–91 form a disordered region; it reads NLGGLSNDSTNNNSNSNNTIDSSKPLS. An F-BAR domain is found at 90–344; it reads LSFENDMSDG…FVDIIDPEVD (255 aa). A coiled-coil region spans residues 184–276; sequence LNEAIKDMEK…EDEYKEQINE (93 aa). Over residues 403–449 the composition is skewed to low complexity; sequence TNTITSQSGSTIISNGASQPIEIPSPQPISEQQQIPPQQQQQQQQAQ. Disordered regions lie at residues 403–468 and 490–518; these read TNTI…PMGR and STSSLLTKDGNSTTSSNTSTSNSNQLSKS. Residues 450-468 are compositionally biased toward polar residues; that stretch reads VPPTSINQSSSPPVNPMGR. Positions 490-513 are enriched in low complexity; sequence STSSLLTKDGNSTTSSNTSTSNSN. Positions 533 to 716 constitute a Rho-GAP domain; the sequence is VELEVLIEND…NMIIDSLETK (184 aa). The disordered stretch occupies residues 727-836; that stretch reads PIIPDDENSD…VSSNGNNINS (110 aa). The segment covering 730–741 has biased composition (acidic residues); that stretch reads PDDENSDDDDDD. Positions 757–836 are enriched in low complexity; the sequence is NDINTTNINN…VSSNGNNINS (80 aa).

It localises to the cytoplasm. The protein localises to the contractile vacuole. In terms of biological role, rho GTPase-activating protein involved in the signal transduction pathway. Regulator of the contractile vacuole network as well as involved in driving vacuole emptying. The chain is GTPase activating protein homolog 1 (mgp1) from Dictyostelium discoideum (Social amoeba).